The sequence spans 214 residues: Adenylate kinase (214 aa).

10 to 15 (GAGKGT) serves as a coordination point for ATP. Positions 30–59 (STGDMLRAAIKAGTELGNAAKRVMDEGKLV) are NMP. AMP is bound by residues Thr-31, Arg-36, 57–59 (KLV), 85–88 (GFPR), and Gln-92. Residues 122–159 (GRRVHPASGRVYHLQYNPPQNDGKDDETGEDLVIRADD) are LID. ATP-binding positions include Arg-123 and 132 to 133 (VY). AMP-binding residues include Arg-156 and Arg-167. Lys-200 lines the ATP pocket.

Belongs to the adenylate kinase family. In terms of assembly, monomer.

It localises to the cytoplasm. It catalyses the reaction AMP + ATP = 2 ADP. The protein operates within purine metabolism; AMP biosynthesis via salvage pathway; AMP from ADP: step 1/1. Functionally, catalyzes the reversible transfer of the terminal phosphate group between ATP and AMP. Plays an important role in cellular energy homeostasis and in adenine nucleotide metabolism. This chain is Adenylate kinase, found in Pseudoalteromonas atlantica (strain T6c / ATCC BAA-1087).